We begin with the raw amino-acid sequence, 126 residues long: KH homology domain-containing protein 1B (126 aa).

A KH domain is found at 19-78; it reads PLVFDMEEDQEDYIFGPDDEYLHTLEVHSNTLIQLERWFSPTGQTRVTVVGPLKARLWVM.

The protein belongs to the KHDC1 family.

The polypeptide is KH homology domain-containing protein 1B (Khdc1b) (Mus musculus (Mouse)).